Reading from the N-terminus, the 504-residue chain is Xylose import ATP-binding protein XylG (504 aa).

2 consecutive ABC transporter domains span residues 6 to 243 (LEMK…VGRE) and 260 to 504 (LKVD…TGGK). 38–45 (GENGAGKS) serves as a coordination point for ATP.

The protein belongs to the ABC transporter superfamily. Xylose importer (TC 3.A.1.2.4) family. As to quaternary structure, the complex is composed of two ATP-binding proteins (XylG), two transmembrane proteins (XylH) and a solute-binding protein (XylF).

Its subcellular location is the cell membrane. It catalyses the reaction D-xylose(out) + ATP + H2O = D-xylose(in) + ADP + phosphate + H(+). Its function is as follows. Part of the ABC transporter complex XylFGH involved in xylose import. Responsible for energy coupling to the transport system. This chain is Xylose import ATP-binding protein XylG, found in Geobacillus kaustophilus (strain HTA426).